The primary structure comprises 1633 residues: Serine-aspartate repeat-containing protein F (1633 aa).

The N-terminal stretch at 1 to 45 is a signal peptide; the sequence is MKKRRQGPINKRVDFLSNKVNKYSIRKFTVGTASILVGATLMFGA. Residues 46–678 form a ligand binding A region region; sequence ADNEAKAAED…GSSTAQGDNP (633 aa). The segment at 51 to 269 is disordered; that stretch reads KAAEDNQLES…SISTDSSVND (219 aa). Residues 61 to 74 show a composition bias toward basic and acidic residues; the sequence is ASKEEQKGSRDNES. Composition is skewed to polar residues over residues 85–99 and 146–168; these read GSHS…NNAT and PKTS…DNLN. The span at 175-184 shows a compositional bias: basic and acidic residues; the sequence is KESKTDEHST. A compositionally biased stretch (polar residues) spans 186-226; the sequence is QAQMSTNKSNLDTNDSPTQSEKTSSQANNDSTDNQSAPSKQ. The segment covering 227–253 has biased composition (basic and acidic residues); that stretch reads LDSKPSEQKVYKTKFNDEPTQDVEHTT. Over residues 255–266 the composition is skewed to polar residues; sequence KLKTPSISTDSS. CNA-B domains are found at residues 679-797, 798-907, 908-1018, and 1019-1129; these read TYSL…YLTP, KYNV…FYKP, IYNL…YKTP, and KYSV…FDDD. Positions 679-1129 are type I collagen binding region; that stretch reads TYSLGDYVWL…SIDNGYFDDD (451 aa). Residues 862–889 are disordered; sequence FETPEGYTPTKQNSGSDEGKDSNGTKTT. Positions 1085–1608 are disordered; it reads KPEGMTQTTA…ANEDHDSKGT (524 aa). Residues 1107-1119 are compositionally biased toward basic and acidic residues; that stretch reads EDVRVTITDHDDF. A compositionally biased stretch (acidic residues) spans 1125-1584; sequence YFDDDSDSDS…DSDSDSDSDS (460 aa). The span at 1585 to 1606 shows a compositional bias: basic and acidic residues; it reads DSDKNAKDKLPDTGANEDHDSK. Positions 1594-1598 match the LPXTG sorting signal motif; sequence LPDTG. Threonine 1597 carries the post-translational modification Pentaglycyl murein peptidoglycan amidated threonine. Positions 1598 to 1633 are cleaved as a propeptide — removed by sortase; that stretch reads GANEDHDSKGTLLGTLFAGLGALLLGRRRKKDNKEK.

This sequence belongs to the serine-aspartate repeat-containing protein (SDr) family.

The protein localises to the secreted. It is found in the cell wall. Functionally, binds to type I collagen via alpha-2(I) or alpha-1(I) chains. The chain is Serine-aspartate repeat-containing protein F (sdrF) from Staphylococcus epidermidis (strain ATCC 12228 / FDA PCI 1200).